The following is a 294-amino-acid chain: Glycine--tRNA ligase alpha subunit (294 aa).

It belongs to the class-II aminoacyl-tRNA synthetase family. Tetramer of two alpha and two beta subunits.

Its subcellular location is the cytoplasm. The enzyme catalyses tRNA(Gly) + glycine + ATP = glycyl-tRNA(Gly) + AMP + diphosphate. The protein is Glycine--tRNA ligase alpha subunit of Trichodesmium erythraeum (strain IMS101).